A 408-amino-acid chain; its full sequence is Neutral cholesterol ester hydrolase 1 (408 aa).

Topologically, residues 1 to 4 are cytoplasmic; the sequence is MRSS. A helical; Signal-anchor for type II membrane protein membrane pass occupies residues 5–25; sequence CVLLTALLALAAYYIYIPLPS. Residues 26–408 lie on the Lumenal side of the membrane; it reads SVSDPWKLML…SYIKWLDQNL (383 aa). The short motif at 113 to 115 is the Involved in the stabilization of the negatively charged intermediate by the formation of the oxyanion hole element; sequence HGG. Ser191 is a catalytic residue. N-linked (GlcNAc...) asparagine glycosylation is found at Asn270 and Asn287. Active-site residues include Asp348 and His378. The N-linked (GlcNAc...) asparagine glycan is linked to Asn389.

Belongs to the 'GDXG' lipolytic enzyme family. Post-translationally, N-glycosylated.

Its subcellular location is the cell membrane. It is found in the microsome. It catalyses the reaction a 1-O-alkyl-2-acetyl-sn-glycerol + H2O = a 1-O-alkyl-sn-glycerol + acetate + H(+). The enzyme catalyses 1-O-hexadecyl-2-acetyl-sn-glycerol + H2O = 1-O-hexadecyl-sn-glycerol + acetate + H(+). The catalysed reaction is a cholesterol ester + H2O = cholesterol + a fatty acid + H(+). It carries out the reaction cholesteryl (9Z-octadecenoate) + H2O = cholesterol + (9Z)-octadecenoate + H(+). Functionally, hydrolyzes 2-acetyl monoalkylglycerol ether (1-O-alkyl-2-acetyl-sn-glycerol), the penultimate precursor of the pathway for de novo synthesis of platelet-activating factor. May be responsible for the hydrolysis of cholesterol esters (such as cholesteryl (9Z-octadecenoate)) in macrophages. Also involved in organ detoxification by hydrolyzing exogenous organophosphorus compounds. The polypeptide is Neutral cholesterol ester hydrolase 1 (NCEH1) (Bos taurus (Bovine)).